Reading from the N-terminus, the 279-residue chain is Putative pyruvate, phosphate dikinase regulatory protein (279 aa).

Position 153-160 (153-160 (GVSRTSKT)) interacts with ADP.

It belongs to the pyruvate, phosphate/water dikinase regulatory protein family. PDRP subfamily.

The catalysed reaction is N(tele)-phospho-L-histidyl/L-threonyl-[pyruvate, phosphate dikinase] + ADP = N(tele)-phospho-L-histidyl/O-phospho-L-threonyl-[pyruvate, phosphate dikinase] + AMP + H(+). It catalyses the reaction N(tele)-phospho-L-histidyl/O-phospho-L-threonyl-[pyruvate, phosphate dikinase] + phosphate + H(+) = N(tele)-phospho-L-histidyl/L-threonyl-[pyruvate, phosphate dikinase] + diphosphate. Its function is as follows. Bifunctional serine/threonine kinase and phosphorylase involved in the regulation of the pyruvate, phosphate dikinase (PPDK) by catalyzing its phosphorylation/dephosphorylation. The protein is Putative pyruvate, phosphate dikinase regulatory protein of Bradyrhizobium diazoefficiens (strain JCM 10833 / BCRC 13528 / IAM 13628 / NBRC 14792 / USDA 110).